A 478-amino-acid chain; its full sequence is Uronate isomerase (478 aa).

The protein belongs to the metallo-dependent hydrolases superfamily. Uronate isomerase family.

The enzyme catalyses D-glucuronate = D-fructuronate. It catalyses the reaction aldehydo-D-galacturonate = keto-D-tagaturonate. It participates in carbohydrate metabolism; pentose and glucuronate interconversion. The protein is Uronate isomerase of Bacillus pumilus (strain SAFR-032).